The primary structure comprises 287 residues: MATFFGEVQSVFSRAVDEDDEEEEGEEEEEDREIIAELERKREVHVTWNPEVTAAIESSPNRRLPCSNVILSVGDNATGFVSSYILSSGSWEVCGSITLWNERCRDCNPRKDSLPAPSSCTFYRSITDPTVLLCQCNSYIAEDQLFQWCEKVFGSLEKSSLNVTVLSTCPVSEYKTPESTYSLPVPFLKALRTSEYREEVPCPLLEQPNIADGLPAAVLTYCQVWQIPAVFYRCYTDLSKLDSITIDAFRPLLSCQRMSRLAADSAKIQETLRKTVKSSEIQSNLYI.

Residues M1–R32 are disordered. Acidic residues predominate over residues D17–R32.

Belongs to the PSMG1 family. In terms of assembly, forms a heterodimer with psmg2. In terms of processing, degraded by the proteasome upon completion of 20S proteasome maturation.

It localises to the cytoplasm. It is found in the endoplasmic reticulum. In terms of biological role, chaperone protein which promotes assembly of the 20S proteasome as part of a heterodimer with psmg2. The protein is Proteasome assembly chaperone 1 of Xenopus tropicalis (Western clawed frog).